Consider the following 299-residue polypeptide: Bifunctional protein FolD (299 aa).

NADP(+)-binding positions include 168–170, serine 193, and isoleucine 234; that span reads GRS.

This sequence belongs to the tetrahydrofolate dehydrogenase/cyclohydrolase family. As to quaternary structure, homodimer.

It catalyses the reaction (6R)-5,10-methylene-5,6,7,8-tetrahydrofolate + NADP(+) = (6R)-5,10-methenyltetrahydrofolate + NADPH. It carries out the reaction (6R)-5,10-methenyltetrahydrofolate + H2O = (6R)-10-formyltetrahydrofolate + H(+). It participates in one-carbon metabolism; tetrahydrofolate interconversion. Catalyzes the oxidation of 5,10-methylenetetrahydrofolate to 5,10-methenyltetrahydrofolate and then the hydrolysis of 5,10-methenyltetrahydrofolate to 10-formyltetrahydrofolate. In Bartonella tribocorum (strain CIP 105476 / IBS 506), this protein is Bifunctional protein FolD.